The chain runs to 717 residues: Fatty acid oxidation complex subunit alpha (717 aa).

The interval 1-190 (MIHAGNAITV…KDGAVDAVVA (190 aa)) is enoyl-CoA hydratase/isomerase. Asp-298 serves as a coordination point for substrate. A 3-hydroxyacyl-CoA dehydrogenase region spans residues 313–717 (HPVNQAAVLG…MAANNKKFYG (405 aa)). Residues Met-326, Asp-345, 402–404 (VTE), Lys-409, and Ser-431 contribute to the NAD(+) site. The active-site For 3-hydroxyacyl-CoA dehydrogenase activity is the His-452. Residue Asn-455 participates in NAD(+) binding. Asn-502 is a binding site for substrate.

It in the N-terminal section; belongs to the enoyl-CoA hydratase/isomerase family. In the C-terminal section; belongs to the 3-hydroxyacyl-CoA dehydrogenase family. As to quaternary structure, heterotetramer of two alpha chains (FadB) and two beta chains (FadA).

It catalyses the reaction a (3S)-3-hydroxyacyl-CoA + NAD(+) = a 3-oxoacyl-CoA + NADH + H(+). The enzyme catalyses a (3S)-3-hydroxyacyl-CoA = a (2E)-enoyl-CoA + H2O. It carries out the reaction a 4-saturated-(3S)-3-hydroxyacyl-CoA = a (3E)-enoyl-CoA + H2O. The catalysed reaction is (3S)-3-hydroxybutanoyl-CoA = (3R)-3-hydroxybutanoyl-CoA. It catalyses the reaction a (3Z)-enoyl-CoA = a 4-saturated (2E)-enoyl-CoA. The enzyme catalyses a (3E)-enoyl-CoA = a 4-saturated (2E)-enoyl-CoA. It participates in lipid metabolism; fatty acid beta-oxidation. Functionally, involved in the aerobic and anaerobic degradation of long-chain fatty acids via beta-oxidation cycle. Catalyzes the formation of 3-oxoacyl-CoA from enoyl-CoA via L-3-hydroxyacyl-CoA. It can also use D-3-hydroxyacyl-CoA and cis-3-enoyl-CoA as substrate. This is Fatty acid oxidation complex subunit alpha from Acinetobacter baumannii (strain SDF).